The sequence spans 535 residues: MTREHQGGTRGLAAARKGFWSGLRFTSLRLRLVLVFGLVALTAAVSASGIAYWLNREAVLTRTQDAVLRDFEQEMQNRAGALPEHPTQDEVQHTAGQMANSSQRFSVLLVAENADGTAVYGSSGGLGGVALSDVPESLRTAVNKEQKLTSANKHPYHLYWQRITDDGTPYLVAGTKVIGGGPTGYMLKSLEPEAKDLNSLAWSLGIATALALLGSALLAQALATTVLKPVHRLGVAARRLGEGKLDTRLRVSGTDELADLSRTFNSAAENLEKRVADMAGREQASRRFVADMSHELRTPLTALTAVTEVLEEELEYAGEGEGEGGSFDPMVEPAVRLVVSETRRLNDLVENLMEVTRFDAGTARLVLDDVDVADQITACIDARAWLDAVDLDAERGVHARLDPRRLDVILANLIGNALKHGGSPVRVSVARADHEIVIRVRDNGPGIPEDVLPHVFDRFYKASASRPRSEGSGLGLSIALENAHIHGGEITAENAPEGGAVFTLRLPQDPSPPADEDGGPDEETEDRGKDAKGQV.

Over 1 to 30 (MTREHQGGTRGLAAARKGFWSGLRFTSLRL) the chain is Cytoplasmic. Residues 31–52 (RLVLVFGLVALTAAVSASGIAY) traverse the membrane as a helical segment. Topologically, residues 53-198 (WLNREAVLTR…SLEPEAKDLN (146 aa)) are extracellular. The chain crosses the membrane as a helical span at residues 199 to 219 (SLAWSLGIATALALLGSALLA). Residues 220-535 (QALATTVLKP…DRGKDAKGQV (316 aa)) are Cytoplasmic-facing. Positions 224-276 (TTVLKPVHRLGVAARRLGEGKLDTRLRVSGTDELADLSRTFNSAAENLEKRVA) constitute an HAMP domain. A Histidine kinase domain is found at 291-510 (DMSHELRTPL…VFTLRLPQDP (220 aa)). His294 bears the Phosphohistidine mark. The tract at residues 493–535 (ENAPEGGAVFTLRLPQDPSPPADEDGGPDEETEDRGKDAKGQV) is disordered. Positions 514–525 (ADEDGGPDEETE) are enriched in acidic residues. The segment covering 526 to 535 (DRGKDAKGQV) has biased composition (basic and acidic residues).

The protein localises to the cell membrane. It carries out the reaction ATP + protein L-histidine = ADP + protein N-phospho-L-histidine.. Functionally, forms part of a two-component regulatory system AfsQ1/AfsQ2 involved in secondary metabolism. May activate AfsQ1 by phosphorylation. The chain is Signal transduction histidine-protein kinase AfsQ2 (afsQ2) from Streptomyces coelicolor (strain ATCC BAA-471 / A3(2) / M145).